A 28-amino-acid chain; its full sequence is Phospholipase A2 3 (28 aa).

This sequence belongs to the phospholipase A2 family. Group I subfamily. Ca(2+) serves as cofactor. As to expression, expressed by the venom gland.

It localises to the secreted. It catalyses the reaction a 1,2-diacyl-sn-glycero-3-phosphocholine + H2O = a 1-acyl-sn-glycero-3-phosphocholine + a fatty acid + H(+). Its function is as follows. Snake venom phospholipase A2 (PLA2) that inhibits neuromuscular transmission by blocking acetylcholine release from the nerve termini. PLA2 catalyzes the calcium-dependent hydrolysis of the 2-acyl groups in 3-sn-phosphoglycerides. This chain is Phospholipase A2 3, found in Micrurus nigrocinctus (Central American coral snake).